Reading from the N-terminus, the 335-residue chain is Protein-arginine kinase (335 aa).

Residues 21-244 (VIISSRIRLA…NQIINEEKQI (224 aa)) enclose the Phosphagen kinase C-terminal domain. ATP is bound by residues 24–28 (SSRIR), His-82, Arg-115, 166–170 (RASVM), and 197–202 (RGIYGE).

The protein belongs to the ATP:guanido phosphotransferase family.

The catalysed reaction is L-arginyl-[protein] + ATP = N(omega)-phospho-L-arginyl-[protein] + ADP + H(+). Catalyzes the specific phosphorylation of arginine residues in proteins. The chain is Protein-arginine kinase from Staphylococcus epidermidis (strain ATCC 12228 / FDA PCI 1200).